We begin with the raw amino-acid sequence, 107 residues long: EMBRYO SURROUNDING FACTOR 1-like protein 5 (107 aa).

The signal sequence occupies residues 1 to 22 (MSLLRFAILCIIFVSLFGVHEC). 4 disulfide bridges follow: C35/C49, C40/C69, C47/C65, and C50/C58. Residues 87-107 (GLGPPIYLFFLGQFIYFVLGL) traverse the membrane as a helical segment.

Belongs to the MEG family. Expressed in flowers.

It is found in the membrane. The protein is EMBRYO SURROUNDING FACTOR 1-like protein 5 (ESFL5) of Arabidopsis thaliana (Mouse-ear cress).